A 473-amino-acid chain; its full sequence is Photosystem II CP43 reaction center protein (473 aa).

A propeptide spanning residues 1 to 14 is cleaved from the precursor; that stretch reads MKILYSLRRFYHVE. Thr15 bears the N-acetylthreonine mark. At Thr15 the chain carries Phosphothreonine. Transmembrane regions (helical) follow at residues 69–93, 134–155, 178–200, 255–275, and 291–312; these read LFEV…PHLA, LLGP…KDRN, KALY…RKIT, KPFA…LSYS, and WFNN…ASQA. Glu367 provides a ligand contact to [CaMn4O5] cluster. The helical transmembrane segment at 447–471 threads the bilayer; that stretch reads RARAAAAGFEKGIDRDLEPVLYMTP.

It belongs to the PsbB/PsbC family. PsbC subfamily. As to quaternary structure, PSII is composed of 1 copy each of membrane proteins PsbA, PsbB, PsbC, PsbD, PsbE, PsbF, PsbH, PsbI, PsbJ, PsbK, PsbL, PsbM, PsbT, PsbX, PsbY, PsbZ, Psb30/Ycf12, at least 3 peripheral proteins of the oxygen-evolving complex and a large number of cofactors. It forms dimeric complexes. It depends on Binds multiple chlorophylls and provides some of the ligands for the Ca-4Mn-5O cluster of the oxygen-evolving complex. It may also provide a ligand for a Cl- that is required for oxygen evolution. PSII binds additional chlorophylls, carotenoids and specific lipids. as a cofactor.

It localises to the plastid. The protein localises to the chloroplast thylakoid membrane. Functionally, one of the components of the core complex of photosystem II (PSII). It binds chlorophyll and helps catalyze the primary light-induced photochemical processes of PSII. PSII is a light-driven water:plastoquinone oxidoreductase, using light energy to abstract electrons from H(2)O, generating O(2) and a proton gradient subsequently used for ATP formation. In Sorghum bicolor (Sorghum), this protein is Photosystem II CP43 reaction center protein.